The chain runs to 652 residues: Endoplasmic reticulum chaperone BiP (652 aa).

An N-terminal signal peptide occupies residues 1-16 (MRHLLLALLLLGGARA). ATP-binding positions include 34 to 37 (GTTY), K94, 225 to 227 (GGT), 291 to 298 (EKAKRALS), and 362 to 365 (GSTR). Residues 123-278 (KPHIQVDVGG…KKKTGKDVRK (156 aa)) form a nucleotide-binding (NBD) region. The segment at 407–417 (QDTGDLVLLDV) is interdomain linker. The segment at 418 to 498 (CPLTLGIETV…PRGVPQIEVT (81 aa)) is substrate-binding (SBD). The interval 630 to 652 (SKLYGSAGPPPTGEEEAAEKDEL) is disordered. A compositionally biased stretch (acidic residues) spans 642-652 (GEEEAAEKDEL). The Prevents secretion from ER motif lies at 649–652 (KDEL).

This sequence belongs to the heat shock protein 70 family. Monomer and homooligomer; homooligomerization via the interdomain linker inactivates the chaperone activity and acts as a storage of HSPA5/BiP molecules. Interacts with DNAJC10. Interacts with DNAJB9/ERdj4; leading to recruit HSPA5/BiP to ERN1/IRE1. Interacts with ERN1/IRE1; interaction takes place following interaction with DNAJB9/ERdj4 and leads to inactivate ERN1/IRE1.

It is found in the endoplasmic reticulum lumen. The protein localises to the melanosome. It localises to the cytoplasm. Its subcellular location is the cell surface. The catalysed reaction is ATP + H2O = ADP + phosphate + H(+). Its activity is regulated as follows. The chaperone activity is regulated by ATP-induced allosteric coupling of the nucleotide-binding (NBD) and substrate-binding (SBD) domains. In the ADP-bound and nucleotide-free (apo) states, the two domains have little interaction. In contrast, in the ATP-bound state the two domains are tightly coupled, which results in drastically accelerated kinetics in both binding and release of polypeptide substrates. J domain-containing co-chaperones (DNAJB9/ERdj4 or DNAJC10/ERdj5) stimulate the ATPase activity and are required for efficient substrate recognition by HSPA5/BiP. Homooligomerization inactivates participating HSPA5/BiP protomers and probably act as reservoirs to store HSPA5/BiP molecules when they are not needed by the cell. Its function is as follows. Endoplasmic reticulum chaperone that plays a key role in protein folding and quality control in the endoplasmic reticulum lumen. Involved in the correct folding of proteins and degradation of misfolded proteins via its interaction with DNAJC10/ERdj5, probably to facilitate the release of DNAJC10/ERdj5 from its substrate. Acts as a key repressor of the EIF2AK3/PERK and ERN1/IRE1-mediated unfolded protein response (UPR). In the unstressed endoplasmic reticulum, recruited by DNAJB9/ERdj4 to the luminal region of ERN1/IRE1, leading to disrupt the dimerization of ERN1/IRE1, thereby inactivating ERN1/IRE1. Also binds and inactivates EIF2AK3/PERK in unstressed cells. Accumulation of misfolded protein in the endoplasmic reticulum causes release of HSPA5/BiP from ERN1/IRE1 and EIF2AK3/PERK, allowing their homodimerization and subsequent activation. May also play a role in apoptosis and cell proliferation. The sequence is that of Endoplasmic reticulum chaperone BiP from Gallus gallus (Chicken).